A 250-amino-acid polypeptide reads, in one-letter code: 3-deoxy-manno-octulosonate cytidylyltransferase (250 aa).

This sequence belongs to the KdsB family.

Its subcellular location is the cytoplasm. The enzyme catalyses 3-deoxy-alpha-D-manno-oct-2-ulosonate + CTP = CMP-3-deoxy-beta-D-manno-octulosonate + diphosphate. Its pathway is nucleotide-sugar biosynthesis; CMP-3-deoxy-D-manno-octulosonate biosynthesis; CMP-3-deoxy-D-manno-octulosonate from 3-deoxy-D-manno-octulosonate and CTP: step 1/1. It participates in bacterial outer membrane biogenesis; lipopolysaccharide biosynthesis. In terms of biological role, activates KDO (a required 8-carbon sugar) for incorporation into bacterial lipopolysaccharide in Gram-negative bacteria. The protein is 3-deoxy-manno-octulosonate cytidylyltransferase of Yersinia pseudotuberculosis serotype O:1b (strain IP 31758).